The following is a 146-amino-acid chain: Hemoglobin subunit beta (146 aa).

The Globin domain maps to 2–146; it reads HWSAEEKQLI…VAHALARKYH (145 aa). Heme b is bound by residues histidine 63 and histidine 92.

This sequence belongs to the globin family. Heterotetramer of two alpha chains and two beta chains. Red blood cells.

Its function is as follows. Involved in oxygen transport from the lung to the various peripheral tissues. This chain is Hemoglobin subunit beta (HBB), found in Stercorarius maccormicki (South polar skua).